The following is a 536-amino-acid chain: Solute carrier family 2, facilitated glucose transporter member 10 (536 aa).

Residues 1–15 (MGLRPAVLLLCASVS) are Cytoplasmic-facing. The chain crosses the membrane as a helical span at residues 16-36 (LLGGLTFGYELAVISGALLPL). At 37–48 (QLNFGLSCLEQE) the chain is on the extracellular side. The chain crosses the membrane as a helical span at residues 49–69 (LLVGSLLLGALLASLVGGFLI). The Cytoplasmic segment spans residues 70-82 (DCYGRRRAILGSN). A helical membrane pass occupies residues 83–103 (AVLLAGSLILGLASSLPWLLL). Residues 104–107 (GRLS) lie on the Extracellular side of the membrane. The helical transmembrane segment at 108-128 (VGFAISLSSMACCIYVSELVG) threads the bilayer. At 129-132 (PRQR) the chain is on the cytoplasmic side. The helical transmembrane segment at 133-153 (GVLVSLYEVGITVGILFSYGL) threads the bilayer. Residues 154 to 166 (NYVLAGSPWGWRH) are Extracellular-facing. A helical transmembrane segment spans residues 167-187 (MFGWAAAPALLQSLSLFLLPA). Residues 188–232 (GAEGTAAPKDLIPLQGRETSKPGLVKPQYSFLDLFRAQDGMWSRT) lie on the Cytoplasmic side of the membrane. A helical transmembrane segment spans residues 233-253 (VVGLGLVLFQQLTGQPNVLYY). 242–243 (QQ) provides a ligand contact to D-glucose. At 254 to 269 (ASTIFRSVGFHGGSSA) the chain is on the extracellular side. Residues 270–290 (VLASVGLGTVKVAATLVATGL) traverse the membrane as a helical segment. Residues 291-298 (VDRAGRRV) lie on the Cytoplasmic side of the membrane. Residues 299–319 (LLLFGCALMALSVSGIGLVSF) form a helical membrane-spanning segment. The Extracellular segment spans residues 320–402 (AVSLDSGPSC…VPTSPILEHT (83 aa)). The helical transmembrane segment at 403-423 (LLCWSALVCMMVYVSAFSVGF) threads the bilayer. Residues 424–442 (GPVTWLVLSEIYPAEIRGR) lie on the Cytoplasmic side of the membrane. Trp428 is a D-glucose binding site. A helical transmembrane segment spans residues 443-463 (AFAFCSSFNWAANLFISLSFL). At 464–468 (DLIGA) the chain is on the extracellular side. Residues 469–489 (IGLAWTFLLYGLTAVLGLAFI) traverse the membrane as a helical segment. At 490–536 (YLLVPETKGQSLAEIEQQFQTSRFPLNFGHRQRIGIQYHRLDVSSAS) the chain is on the cytoplasmic side.

It belongs to the major facilitator superfamily. Sugar transporter (TC 2.A.1.1) family. Glucose transporter subfamily.

It localises to the endomembrane system. It is found in the cytoplasm. The protein localises to the perinuclear region. The enzyme catalyses D-glucose(out) = D-glucose(in). Its function is as follows. Facilitative glucose transporter required for the development of the cardiovascular system. The chain is Solute carrier family 2, facilitated glucose transporter member 10 from Mus musculus (Mouse).